The following is a 77-amino-acid chain: EMBRYO SURROUNDING FACTOR 1-like protein 9 (77 aa).

The signal sequence occupies residues 1 to 22 (MSSSRFLILCIILISFFPLHEC). Disulfide bonds link C38–C54, C43–C75, C52–C71, and C55–C64.

This sequence belongs to the MEG family. As to expression, expressed in flowers.

The protein is EMBRYO SURROUNDING FACTOR 1-like protein 9 (ESFL9) of Arabidopsis thaliana (Mouse-ear cress).